Reading from the N-terminus, the 502-residue chain is Protein ANKUB1 (502 aa).

This is Protein ANKUB1 (ANKUB1) from Homo sapiens (Human).